Consider the following 962-residue polypeptide: Translation initiation factor IF-2 (962 aa).

The interval 99–365 is disordered; that stretch reads VKAAQTQAAP…GKKGKKLKLE (267 aa). Over residues 117–141 the composition is skewed to basic and acidic residues; the sequence is DAAKARAEAAARAEARAKAEAEAAK. Residues 145 to 155 show a composition bias toward low complexity; that stretch reads AKAGNKAKPAA. The segment covering 173–216 has biased composition (basic and acidic residues); that stretch reads KPAEESKAEKAQADKMPSKKPAEPKEKAAKPKHERNGKGKDAKK. Residues 219–234 show a composition bias toward low complexity; it reads KPAAPAVPQPVVSAEE. Over residues 235 to 269 the composition is skewed to basic and acidic residues; the sequence is QAQRDEEARRAAALRAHQEALLKEKQERQARREAM. The span at 270-283 shows a compositional bias: low complexity; that stretch reads KQQAEQQAKAAQEA. Residues 338 to 354 are compositionally biased toward basic and acidic residues; sequence GGRDRNNARNGDDERVR. The region spanning 462-631 is the tr-type G domain; sequence PRPPVVTVMG…LLEAEVLELT (170 aa). Residues 471–478 are G1; the sequence is GHVDHGKT. GTP is bound at residue 471 to 478; the sequence is GHVDHGKT. Positions 496-500 are G2; sequence GITQH. The tract at residues 517-520 is G3; that stretch reads DTPG. GTP contacts are provided by residues 517–521 and 571–574; these read DTPGH and NKID. The interval 571-574 is G4; sequence NKID. Positions 607 to 609 are G5; the sequence is SAK.

It belongs to the TRAFAC class translation factor GTPase superfamily. Classic translation factor GTPase family. IF-2 subfamily.

The protein localises to the cytoplasm. Its function is as follows. One of the essential components for the initiation of protein synthesis. Protects formylmethionyl-tRNA from spontaneous hydrolysis and promotes its binding to the 30S ribosomal subunits. Also involved in the hydrolysis of GTP during the formation of the 70S ribosomal complex. This is Translation initiation factor IF-2 from Neisseria meningitidis serogroup C (strain 053442).